Reading from the N-terminus, the 446-residue chain is Glycerol-3-phosphate acyltransferase 3 (446 aa).

3 helical membrane passes run 25-45 (LPSA…VLVK), 142-162 (LRLT…LLPL), and 164-184 (FTLA…VGQL). The HXXXXD motif motif lies at 232 to 237 (HTSPID). The helical transmembrane segment at 352-372 (IVSYLLRIMTSWAIVCHVWYM) threads the bilayer. A disordered region spans residues 418–446 (FKEEQQKNYSKMLVRNGSQGNLPAGTESD).

The protein belongs to the 1-acyl-sn-glycerol-3-phosphate acyltransferase family.

The protein resides in the endoplasmic reticulum membrane. It carries out the reaction sn-glycerol 3-phosphate + an acyl-CoA = a 1-acyl-sn-glycero-3-phosphate + CoA. It catalyses the reaction a 1-acyl-sn-glycero-3-phosphate + an acyl-CoA = a 1,2-diacyl-sn-glycero-3-phosphate + CoA. The catalysed reaction is dodecanoyl-CoA + sn-glycerol 3-phosphate = 1-dodecanoyl-sn-glycerol 3-phosphate + CoA. The enzyme catalyses sn-glycerol 3-phosphate + hexadecanoyl-CoA = 1-hexadecanoyl-sn-glycero-3-phosphate + CoA. It carries out the reaction sn-glycerol 3-phosphate + (9Z)-octadecenoyl-CoA = 1-(9Z-octadecenoyl)-sn-glycero-3-phosphate + CoA. It catalyses the reaction (9Z,12Z)-octadecadienoyl-CoA + sn-glycerol 3-phosphate = 1-(9Z,12Z)-octadecadienoyl-sn-glycero-3-phosphate + CoA. The catalysed reaction is 1-tetradecanoyl-sn-glycerol 3-phosphate + (9Z)-octadecenoyl-CoA = 1-tetradecanoyl-2-(9Z)-octadecenoyl-sn-glycero-3-phosphate + CoA. The enzyme catalyses 1-hexadecanoyl-sn-glycero-3-phosphate + (9Z)-octadecenoyl-CoA = 1-hexadecanoyl-2-(9Z-octadecenoyl)-sn-glycero-3-phosphate + CoA. It carries out the reaction 1-(9Z-octadecenoyl)-sn-glycero-3-phosphate + (9Z)-octadecenoyl-CoA = 1,2-di-(9Z-octadecenoyl)-sn-glycero-3-phosphate + CoA. It catalyses the reaction 1-(6Z,9Z,12Z-octadecatrienoyl)-sn-glycero-3-phosphate + (9Z)-octadecenoyl-CoA = (6Z,9Z,12Z)-octadecatrienoyl-2-(9Z)-octadecenoyl-sn-glycero-3-phosphate + CoA. The catalysed reaction is 1-(9Z,12Z,15Z)-octadecatrienoyl-sn-glycero-3-phosphate + (9Z)-octadecenoyl-CoA = 1-(9Z,12Z,15Z)-octadecatrienoyl-2-(9Z)-octadecenoyl-sn-glycero-3-phosphate + CoA. The enzyme catalyses 1-(9Z-octadecenoyl)-sn-glycero-3-phosphate + tetradecanoyl-CoA = 1-(9Z)-octadecenoyl-2-tetradecanoyl-sn-glycero-3-phosphate + CoA. It carries out the reaction 1-(9Z-octadecenoyl)-sn-glycero-3-phosphate + hexadecanoyl-CoA = 1-(9Z)-octadecenoyl-2-hexadecanoyl-sn-glycero-3-phosphate + CoA. It catalyses the reaction 1-(9Z-octadecenoyl)-sn-glycero-3-phosphate + octadecanoyl-CoA = 1-(9Z-octadecenoyl)-2-octadecanoyl-sn-glycero-3-phosphate + CoA. The catalysed reaction is 1-(9Z-octadecenoyl)-sn-glycero-3-phosphate + (9Z,12Z)-octadecadienoyl-CoA = 1-(9Z)-octadecenoyl-2-(9Z,12Z)-octadecadienoyl-sn-glycero-3-phosphate + CoA. The enzyme catalyses 1-(5Z,8Z,11Z,14Z-eicosatetraenoyl)-sn-glycero-3-phosphate + (9Z)-octadecenoyl-CoA = 1-(5Z,8Z,11Z,14Z)-eicosatetraenoyl-2-(9Z)-octadecenoyl-sn-glycero-3-phosphate + CoA. Its pathway is glycerolipid metabolism; triacylglycerol biosynthesis. The protein operates within phospholipid metabolism; CDP-diacylglycerol biosynthesis; CDP-diacylglycerol from sn-glycerol 3-phosphate: step 1/3. Its function is as follows. Converts glycerol-3-phosphate to 1-acyl-sn-glycerol-3-phosphate (lysophosphatidic acid or LPA) by incorporating an acyl moiety at the sn-1 position of the glycerol backbone. Also converts LPA into 1,2-diacyl-sn-glycerol-3-phosphate (phosphatidic acid or PA) by incorporating an acyl moiety at the sn-2 position of the glycerol backbone. Protects cells against lipotoxicity. This Gallus gallus (Chicken) protein is Glycerol-3-phosphate acyltransferase 3.